The chain runs to 431 residues: Protein translocase subunit SecY (431 aa).

Transmembrane regions (helical) follow at residues 18–38, 64–84, 116–136, 146–166, 175–195, 214–234, 262–282, 309–329, 369–389, and 390–410; these read IIFT…PVPH, LFNF…SIII, FTIV…NNMA, VGTY…LMWL, VGNG…PQTI, IIKV…VIFI, LPLK…AFIT, PVGM…YAFV, FVGS…VNIA, and GLPS…GVAL.

It belongs to the SecY/SEC61-alpha family. Component of the Sec protein translocase complex. Heterotrimer consisting of SecY, SecE and SecG subunits. The heterotrimers can form oligomers, although 1 heterotrimer is thought to be able to translocate proteins. Interacts with the ribosome. Interacts with SecDF, and other proteins may be involved. Interacts with SecA.

It is found in the cell membrane. The central subunit of the protein translocation channel SecYEG. Consists of two halves formed by TMs 1-5 and 6-10. These two domains form a lateral gate at the front which open onto the bilayer between TMs 2 and 7, and are clamped together by SecE at the back. The channel is closed by both a pore ring composed of hydrophobic SecY resides and a short helix (helix 2A) on the extracellular side of the membrane which forms a plug. The plug probably moves laterally to allow the channel to open. The ring and the pore may move independently. The sequence is that of Protein translocase subunit SecY from Bacillus licheniformis (strain ATCC 14580 / DSM 13 / JCM 2505 / CCUG 7422 / NBRC 12200 / NCIMB 9375 / NCTC 10341 / NRRL NRS-1264 / Gibson 46).